The following is a 61-amino-acid chain: Insect toxin BsIT3 (61 aa).

The LCN-type CS-alpha/beta domain occupies aspartate 1–asparagine 61. 4 cysteine pairs are disulfide-bonded: cysteine 10/cysteine 60, cysteine 14/cysteine 35, cysteine 21/cysteine 42, and cysteine 25/cysteine 44.

It belongs to the long (4 C-C) scorpion toxin superfamily. Sodium channel inhibitor family. Beta subfamily. Expressed by the venom gland.

The protein localises to the secreted. Its function is as follows. Depressant insect beta-toxins cause a transient contraction paralysis followed by a slow flaccid paralysis. They bind voltage-independently at site-4 of sodium channels (Nav) and shift the voltage of activation toward more negative potentials thereby affecting sodium channel activation and promoting spontaneous and repetitive firing. This toxin is active only on insects. The polypeptide is Insect toxin BsIT3 (Hottentotta tamulus sindicus (Scorpion)).